We begin with the raw amino-acid sequence, 187 residues long: Small ribosomal subunit protein uS5 (187 aa).

Positions 1-20 (MAERENRRDRRDDRSREETP) are disordered. The S5 DRBM domain occupies 22–85 (FADRLVAINR…EQAKRQMIRV (64 aa)). The segment at 154 to 174 (DGLKRESSPRQVAQRRGKKVA) is disordered.

It belongs to the universal ribosomal protein uS5 family. As to quaternary structure, part of the 30S ribosomal subunit. Contacts proteins S4 and S8.

In terms of biological role, with S4 and S12 plays an important role in translational accuracy. Located at the back of the 30S subunit body where it stabilizes the conformation of the head with respect to the body. This is Small ribosomal subunit protein uS5 from Cereibacter sphaeroides (strain ATCC 17025 / ATH 2.4.3) (Rhodobacter sphaeroides).